A 215-amino-acid polypeptide reads, in one-letter code: Large ribosomal subunit protein uL3 (215 aa).

The disordered stretch occupies residues 136–155; the sequence is GVSISHRSHGSTGQRQDPGK. Position 151 is an N5-methylglutamine (Gln-151).

It belongs to the universal ribosomal protein uL3 family. In terms of assembly, part of the 50S ribosomal subunit. Forms a cluster with proteins L14 and L19. Post-translationally, methylated by PrmB.

Its function is as follows. One of the primary rRNA binding proteins, it binds directly near the 3'-end of the 23S rRNA, where it nucleates assembly of the 50S subunit. The sequence is that of Large ribosomal subunit protein uL3 from Rickettsia typhi (strain ATCC VR-144 / Wilmington).